The primary structure comprises 382 residues: 3-dehydroquinate synthase (382 aa).

Residues 81 to 86, 115 to 119, 139 to 140, Lys152, and Lys161 contribute to the NAD(+) site; these read EGEISK, GVVGD, and TS. Glu194, His256, and His274 together coordinate Zn(2+).

It belongs to the sugar phosphate cyclases superfamily. Dehydroquinate synthase family. The cofactor is NAD(+). Co(2+) is required as a cofactor. It depends on Zn(2+) as a cofactor.

It localises to the cytoplasm. The enzyme catalyses 7-phospho-2-dehydro-3-deoxy-D-arabino-heptonate = 3-dehydroquinate + phosphate. The protein operates within metabolic intermediate biosynthesis; chorismate biosynthesis; chorismate from D-erythrose 4-phosphate and phosphoenolpyruvate: step 2/7. Its function is as follows. Catalyzes the conversion of 3-deoxy-D-arabino-heptulosonate 7-phosphate (DAHP) to dehydroquinate (DHQ). This is 3-dehydroquinate synthase from Bradyrhizobium diazoefficiens (strain JCM 10833 / BCRC 13528 / IAM 13628 / NBRC 14792 / USDA 110).